A 283-amino-acid chain; its full sequence is Polyamine aminopropyltransferase (283 aa).

The PABS domain occupies 2–237 (ELWYTDQHTK…GHWLFGFASK (236 aa)). Q31 lines the S-methyl-5'-thioadenosine pocket. Positions 62 and 86 each coordinate spermidine. Residues E106 and 137-138 (EG) contribute to the S-methyl-5'-thioadenosine site. D155 (proton acceptor) is an active-site residue. Spermidine is bound at residue 155–158 (DCAD). Residue P162 coordinates S-methyl-5'-thioadenosine.

This sequence belongs to the spermidine/spermine synthase family. Homodimer or homotetramer.

The protein resides in the cytoplasm. The catalysed reaction is S-adenosyl 3-(methylsulfanyl)propylamine + putrescine = S-methyl-5'-thioadenosine + spermidine + H(+). It participates in amine and polyamine biosynthesis; spermidine biosynthesis; spermidine from putrescine: step 1/1. Its function is as follows. Catalyzes the irreversible transfer of a propylamine group from the amino donor S-adenosylmethioninamine (decarboxy-AdoMet) to putrescine (1,4-diaminobutane) to yield spermidine. The sequence is that of Polyamine aminopropyltransferase from Lachnoclostridium phytofermentans (strain ATCC 700394 / DSM 18823 / ISDg) (Clostridium phytofermentans).